Reading from the N-terminus, the 124-residue chain is UPF0482 protein YpsIP31758_1865 (124 aa).

The N-terminal stretch at 1 to 32 is a signal peptide; it reads MMKINNLPRLIRTFLPATLLMLPLVWQTPALA. Residues 47-68 form a disordered region; that stretch reads GGNNDPMSKEQARQSQQQWDET.

Belongs to the UPF0482 family.

The protein is UPF0482 protein YpsIP31758_1865 of Yersinia pseudotuberculosis serotype O:1b (strain IP 31758).